Consider the following 134-residue polypeptide: Postmeiotic segregation increased 2-like protein 5 (134 aa).

This sequence belongs to the DNA mismatch repair MutL/HexB family.

The chain is Postmeiotic segregation increased 2-like protein 5 (PMS2P5) from Homo sapiens (Human).